The primary structure comprises 431 residues: Probable prephenate dehydrogenase [NADP(+)] (431 aa).

5–34 (FQVGIIGFGDMGRLYAEYISKAGWRVNVCD) is an NADP(+) binding site. Positions 5–285 (FQVGIIGFGD…GENMDRNSSG (281 aa)) constitute a Prephenate/arogenate dehydrogenase domain.

Belongs to the prephenate/arogenate dehydrogenase family.

The protein localises to the cytoplasm. The catalysed reaction is prephenate + NADP(+) = 3-(4-hydroxyphenyl)pyruvate + CO2 + NADPH. Its pathway is amino-acid biosynthesis; L-tyrosine biosynthesis; (4-hydroxyphenyl)pyruvate from prephenate (NADP(+) route): step 1/1. The protein is Probable prephenate dehydrogenase [NADP(+)] (tyr1) of Schizosaccharomyces pombe (strain 972 / ATCC 24843) (Fission yeast).